A 238-amino-acid polypeptide reads, in one-letter code: MRTDNRTAGQLRPVQITTGCLMTAEGSALIKVGNTHVLCAATIEDTVPPFLRNTGKGWVTAEYSMLPRATAKRTPREVTKGRPSGRTHEIQRLIGRSMRSAVDMSSFGERTLIIDCDVIQADGGTRTASITGAFVAMALAFRQLIEYRALKANPIRDYVAATSVGLVGGIPMLDLCYEEDSQADVDMNVVMTGGGKFVEVQATAEHSAFDDAQMAELTELARTGIAQLVRMQKEIIEG.

Residues arginine 86 and 124–126 (GTR) contribute to the phosphate site.

The protein belongs to the RNase PH family. Homohexameric ring arranged as a trimer of dimers.

The catalysed reaction is tRNA(n+1) + phosphate = tRNA(n) + a ribonucleoside 5'-diphosphate. Phosphorolytic 3'-5' exoribonuclease that plays an important role in tRNA 3'-end maturation. Removes nucleotide residues following the 3'-CCA terminus of tRNAs; can also add nucleotides to the ends of RNA molecules by using nucleoside diphosphates as substrates, but this may not be physiologically important. Probably plays a role in initiation of 16S rRNA degradation (leading to ribosome degradation) during starvation. In Solibacter usitatus (strain Ellin6076), this protein is Ribonuclease PH.